The primary structure comprises 867 residues: Glucans biosynthesis glucosyltransferase H (867 aa).

The interval 71–91 (DDEGRTQLETMPKATRSSISP) is disordered. A run of 6 helical transmembrane segments spans residues 139 to 156 (YILLLLTFSQTALATWYM), 194 to 216 (ILILFAILFCWISAGFWTALMGF), 518 to 540 (VMSYLSAPLWFMFLALSTALQVV), 568 to 590 (IALLASTMVLLFLPKLLSILLIW), 603 to 625 (VTISLLLEVILSVLLAPVRMLFH), and 680 to 702 (FLFWLAPIVFSLILSPFVSVFSS).

It belongs to the glycosyltransferase 2 family. OpgH subfamily.

The protein localises to the cell inner membrane. It functions in the pathway glycan metabolism; osmoregulated periplasmic glucan (OPG) biosynthesis. Functionally, involved in the biosynthesis of osmoregulated periplasmic glucans (OPGs). In Nitrosomonas europaea (strain ATCC 19718 / CIP 103999 / KCTC 2705 / NBRC 14298), this protein is Glucans biosynthesis glucosyltransferase H.